The chain runs to 644 residues: DNA gyrase subunit B (644 aa).

Positions 429 to 543 (CEIFLVEGDS…AGYVYIAQPP (115 aa)) constitute a Toprim domain. Mg(2+)-binding residues include Glu435, Asp508, and Asp510.

It belongs to the type II topoisomerase GyrB family. Heterotetramer, composed of two GyrA and two GyrB chains. In the heterotetramer, GyrA contains the active site tyrosine that forms a transient covalent intermediate with DNA, while GyrB binds cofactors and catalyzes ATP hydrolysis. It depends on Mg(2+) as a cofactor. Mn(2+) serves as cofactor. Ca(2+) is required as a cofactor.

The protein localises to the cytoplasm. The enzyme catalyses ATP-dependent breakage, passage and rejoining of double-stranded DNA.. Its function is as follows. A type II topoisomerase that negatively supercoils closed circular double-stranded (ds) DNA in an ATP-dependent manner to modulate DNA topology and maintain chromosomes in an underwound state. Negative supercoiling favors strand separation, and DNA replication, transcription, recombination and repair, all of which involve strand separation. Also able to catalyze the interconversion of other topological isomers of dsDNA rings, including catenanes and knotted rings. Type II topoisomerases break and join 2 DNA strands simultaneously in an ATP-dependent manner. The chain is DNA gyrase subunit B from Staphylococcus aureus (strain USA300).